The chain runs to 86 residues: Cell division topological specificity factor (86 aa).

Belongs to the MinE family.

In terms of biological role, prevents the cell division inhibition by proteins MinC and MinD at internal division sites while permitting inhibition at polar sites. This ensures cell division at the proper site by restricting the formation of a division septum at the midpoint of the long axis of the cell. This chain is Cell division topological specificity factor, found in Bordetella petrii (strain ATCC BAA-461 / DSM 12804 / CCUG 43448).